Here is a 268-residue protein sequence, read N- to C-terminus: Probable 1-acyl-sn-glycerol-3-phosphate acyltransferase (268 aa).

Residues H92 to D97 carry the HXXXXD motif motif.

This sequence belongs to the 1-acyl-sn-glycerol-3-phosphate acyltransferase family.

The catalysed reaction is a 1-acyl-sn-glycero-3-phosphate + an acyl-CoA = a 1,2-diacyl-sn-glycero-3-phosphate + CoA. Its pathway is phospholipid metabolism; CDP-diacylglycerol biosynthesis; CDP-diacylglycerol from sn-glycerol 3-phosphate: step 2/3. Functionally, converts lysophosphatidic acid (LPA) into phosphatidic acid by incorporating acyl moiety at the 2 position. The polypeptide is Probable 1-acyl-sn-glycerol-3-phosphate acyltransferase (plsC) (Mycoplasma genitalium (strain ATCC 33530 / DSM 19775 / NCTC 10195 / G37) (Mycoplasmoides genitalium)).